The sequence spans 209 residues: Ribosomal RNA small subunit methyltransferase G (209 aa).

Residues Gly-71, Phe-76, 122–123 (AE), and Arg-135 each bind S-adenosyl-L-methionine.

It belongs to the methyltransferase superfamily. RNA methyltransferase RsmG family.

Its subcellular location is the cytoplasm. Specifically methylates the N7 position of a guanine in 16S rRNA. This is Ribosomal RNA small subunit methyltransferase G from Phocaeicola vulgatus (strain ATCC 8482 / DSM 1447 / JCM 5826 / CCUG 4940 / NBRC 14291 / NCTC 11154) (Bacteroides vulgatus).